The sequence spans 264 residues: MAAELTTAGYIGHHLAFLKTGDSFWHVHLDTLLFSIISGAIFLFVFSKVAKKATPGVPSKMQCFVEIMVDWIDGIVKENFHGPRHAVGPLALTIFCWVFIMNAIDLIPVDFLPQLAHLFGIEYLRAVPTADISGTLGLSIGVFFLIIFYTIKSKGMSGFVKEYTLHPFNHPLLIPVNLALESVTLLAKPVSLAFRLFGNMYAGELIFILIAVMYMANNFALNSMGIFMHLAWAIFHILVITLQAFIFMMLTVVYLSMGYNKAEH.

A run of 6 helical transmembrane segments spans residues 27 to 47 (VHLDTLLFSIISGAIFLFVFS), 87 to 107 (VGPLALTIFCWVFIMNAIDLI), 131 to 151 (DISGTLGLSIGVFFLIIFYTI), 172 to 192 (LLIPVNLALESVTLLAKPVSL), 196 to 216 (LFGNMYAGELIFILIAVMYMA), and 230 to 250 (LAWAIFHILVITLQAFIFMML).

The protein belongs to the ATPase A chain family. F-type ATPases have 2 components, CF(1) - the catalytic core - and CF(0) - the membrane proton channel. CF(1) has five subunits: alpha(3), beta(3), gamma(1), delta(1), epsilon(1). CF(0) has three main subunits: a(1), b(2) and c(9-12). The alpha and beta chains form an alternating ring which encloses part of the gamma chain. CF(1) is attached to CF(0) by a central stalk formed by the gamma and epsilon chains, while a peripheral stalk is formed by the delta and b chains.

The protein resides in the cell inner membrane. In terms of biological role, key component of the proton channel; it plays a direct role in the translocation of protons across the membrane. This Pasteurella multocida (strain Pm70) protein is ATP synthase subunit a.